The chain runs to 388 residues: Chorismate synthase (388 aa).

The NADP(+) site is built by arginine 39 and arginine 45. FMN-binding positions include 130-132 (RSS), 251-252 (NA), glycine 296, 311-315 (KPIPT), and arginine 337.

It belongs to the chorismate synthase family. In terms of assembly, homotetramer. FMNH2 serves as cofactor.

The catalysed reaction is 5-O-(1-carboxyvinyl)-3-phosphoshikimate = chorismate + phosphate. The protein operates within metabolic intermediate biosynthesis; chorismate biosynthesis; chorismate from D-erythrose 4-phosphate and phosphoenolpyruvate: step 7/7. Catalyzes the anti-1,4-elimination of the C-3 phosphate and the C-6 proR hydrogen from 5-enolpyruvylshikimate-3-phosphate (EPSP) to yield chorismate, which is the branch point compound that serves as the starting substrate for the three terminal pathways of aromatic amino acid biosynthesis. This reaction introduces a second double bond into the aromatic ring system. This is Chorismate synthase from Streptococcus mutans serotype c (strain ATCC 700610 / UA159).